We begin with the raw amino-acid sequence, 217 residues long: uncharacterized protein (217 aa).

One can recognise an ABC transporter domain in the interval 14–217; sequence LAVNNLCIER…NELATEIISL (204 aa). 46–53 lines the ATP pocket; the sequence is GEIGSGKT.

Belongs to the ABC transporter superfamily.

This is an uncharacterized protein from Haemophilus influenzae (strain ATCC 51907 / DSM 11121 / KW20 / Rd).